We begin with the raw amino-acid sequence, 206 residues long: Triafestin-1 (206 aa).

An N-terminal signal peptide occupies residues 1–18 (MKTILAVIFFGILAFAFA). An N-linked (GlcNAc...) asparagine glycan is attached at N55.

Belongs to the calycin superfamily. Triabin family. Interacts with host coagulation factor XII (F12) (inactive and activated) (via amino acids 1-77). Interacts with host high molecular weight kininogen (KNG1) (via amino acids 402-532). In terms of tissue distribution, salivary gland (at protein level).

It is found in the secreted. With respect to regulation, zn(2+) modulates binding to host coagulation factor XII (F12) and high molecular weight kininogen (KNG1). In terms of biological role, suppresses activation of the host plasma kallikrein-kinin system, leading to inhibition of the intrinsic coagulation pathway. Blocks host coagulation factor XII (F12) and prekallikrein (KLKB1) reciprocal activation without affecting their amidolytic activities. Blocks binding of host F12 and high molecular weight kininogen (KNG1) to negatively charged surfaces. Attenuates generation of bradykinin by interfering with activation of host kallikrein-kinin system. The protein is Triafestin-1 of Triatoma infestans (Assassin bug).